The sequence spans 421 residues: Imidazolonepropionase (421 aa).

Fe(3+) is bound by residues histidine 80 and histidine 82. Zn(2+) is bound by residues histidine 80 and histidine 82. The 4-imidazolone-5-propanoate site is built by arginine 89, tyrosine 152, and histidine 185. N-formimidoyl-L-glutamate is bound at residue tyrosine 152. Position 249 (histidine 249) interacts with Fe(3+). Histidine 249 is a Zn(2+) binding site. Glutamate 252 provides a ligand contact to 4-imidazolone-5-propanoate. Aspartate 324 provides a ligand contact to Fe(3+). Zn(2+) is bound at residue aspartate 324. The N-formimidoyl-L-glutamate site is built by asparagine 326 and glycine 328. Residue serine 329 participates in 4-imidazolone-5-propanoate binding.

The protein belongs to the metallo-dependent hydrolases superfamily. HutI family. As to quaternary structure, homodimer. The cofactor is Zn(2+). It depends on Fe(3+) as a cofactor.

The protein localises to the cytoplasm. It carries out the reaction 4-imidazolone-5-propanoate + H2O = N-formimidoyl-L-glutamate. It functions in the pathway amino-acid degradation; L-histidine degradation into L-glutamate; N-formimidoyl-L-glutamate from L-histidine: step 3/3. Its function is as follows. Catalyzes the hydrolytic cleavage of the carbon-nitrogen bond in imidazolone-5-propanoate to yield N-formimidoyl-L-glutamate. It is the third step in the universal histidine degradation pathway. This is Imidazolonepropionase from Bacillus subtilis (strain 168).